The chain runs to 233 residues: Antilisterial bacteriocin subtilosin biosynthesis protein AlbG (233 aa).

5 helical membrane passes run 4–24, 46–66, 116–136, 145–165, and 192–212; these read STVFTVLLLLLGMAAYSFGWV, GLLACIAAVLMLPAFLYLHYV, TYVMAAVLCQVIIFGCMFEIV, TPPIVSTGMALLLILYLLFYM, and IGWMLSFTISELLFLIILAAI.

The protein resides in the cell membrane. Involved in the production of the bacteriocin subtilosin. This is Antilisterial bacteriocin subtilosin biosynthesis protein AlbG (albG) from Bacillus subtilis.